A 91-amino-acid chain; its full sequence is Large ribosomal subunit protein uL29 (91 aa).

Residues 67–91 are disordered; the sequence is AAPLAESSAPAKTKSRARKSKKEAL. Basic residues predominate over residues 79 to 91; sequence TKSRARKSKKEAL.

The protein belongs to the universal ribosomal protein uL29 family.

The chain is Large ribosomal subunit protein uL29 from Acidobacterium capsulatum (strain ATCC 51196 / DSM 11244 / BCRC 80197 / JCM 7670 / NBRC 15755 / NCIMB 13165 / 161).